The primary structure comprises 238 residues: MSTSNGSANGTNGVGLPRGDEPEIIAVRRGMFGNRDTGDTSGYGRLVRPVALPGSTPRPYGGYFDAVMDRLAEVLGEERYAMSIERVVVYRDQLTIEVSRVQLPAVASVLRDDPDLRFELCLGVSGVHYPEDTGRELHAVYPLMSITHNRRIQLEVAAPDADPHIPSLYAVYPTTDWHERETYDFFGIIFDGHPSLTRIEMPDDWEGHPQRKDYPLGGIPVEYHGAQIPPPDQRRSYS.

The span at Met-1–Thr-11 shows a compositional bias: polar residues. The tract at residues Met-1–Asp-20 is disordered.

The protein belongs to the complex I 30 kDa subunit family. As to quaternary structure, NDH-1 is composed of 14 different subunits. Subunits NuoB, C, D, E, F, and G constitute the peripheral sector of the complex.

It is found in the cell membrane. It catalyses the reaction a quinone + NADH + 5 H(+)(in) = a quinol + NAD(+) + 4 H(+)(out). Functionally, NDH-1 shuttles electrons from NADH, via FMN and iron-sulfur (Fe-S) centers, to quinones in the respiratory chain. The immediate electron acceptor for the enzyme in this species is believed to be a menaquinone. Couples the redox reaction to proton translocation (for every two electrons transferred, four hydrogen ions are translocated across the cytoplasmic membrane), and thus conserves the redox energy in a proton gradient. The polypeptide is NADH-quinone oxidoreductase subunit C (Mycolicibacterium smegmatis (strain ATCC 700084 / mc(2)155) (Mycobacterium smegmatis)).